Consider the following 585-residue polypeptide: MARPDPSAPPSLLLLLLAQLVGRAAAASKAPVCQEITVPMCRGIGYNLTHMPNQFNHDTQDEAGLEVHQFWPLVEIHCSPDLRFFLCSMYTPICLPDYHKPLPPCRSVCERAKAGCSPLMRQYGFAWPERMSCDRLPVLGGDAEVLCMDYNRSEATTASPKSFPAKPTLPGPPGAPSSGGECPSGGPSVCTCREPFVPILKESHPLYNKVRTGQVPNCAVPCYQPSFSPDERTFATFWIGLWSVLCFISTSTTVATFLIDMERFRYPERPIIFLSACYLCVSLGFLVRLVVGHASVACSREHSHIHYETTGPALCTVVFLLVYFFGMASSIWWVILSLTWFLAAGMKWGNEAIAGYAQYFHLAAWLIPSVKSITALALSSVDGDPVAGVCYVGNQNLNSLRGFVLGPLVLYLLVGTLFLLAGFVSLFRIRSVIKQGGTKTDKLEKLMIRIGIFTLLYTVPASIVVACYLYEQHYRESWEAALTCACPGSDAGQPRAKPEYWVLMLKYFMCLVVGITSGVWIWSGKTLESWRRFTSRCCCSSRRGHKSGGAMVAGDYAEASAALTGRTGPPGPAAAYHKQVSLSHV.

The N-terminal stretch at 1 to 26 (MARPDPSAPPSLLLLLLAQLVGRAAA) is a signal peptide. Residues 27–238 (ASKAPVCQEI…PDERTFATFW (212 aa)) are Extracellular-facing. Residues 28–150 (SKAPVCQEIT…GDAEVLCMDY (123 aa)) form the FZ domain. 5 disulfide bridges follow: cysteine 33–cysteine 94, cysteine 41–cysteine 87, cysteine 78–cysteine 116, cysteine 105–cysteine 147, and cysteine 109–cysteine 133. An N-linked (GlcNAc...) asparagine glycan is attached at asparagine 47. N-linked (GlcNAc...) asparagine glycosylation occurs at asparagine 151. Residues 156 to 182 (TTASPKSFPAKPTLPGPPGAPSSGGEC) are disordered. A helical transmembrane segment spans residues 239-259 (IGLWSVLCFISTSTTVATFLI). Topologically, residues 260-270 (DMERFRYPERP) are cytoplasmic. Residues 271-291 (IIFLSACYLCVSLGFLVRLVV) form a helical membrane-spanning segment. Topologically, residues 292-315 (GHASVACSREHSHIHYETTGPALC) are extracellular. A helical transmembrane segment spans residues 316–336 (TVVFLLVYFFGMASSIWWVIL). Residues 337–358 (SLTWFLAAGMKWGNEAIAGYAQ) are Cytoplasmic-facing. Residues 359-379 (YFHLAAWLIPSVKSITALALS) traverse the membrane as a helical segment. Topologically, residues 380–402 (SVDGDPVAGVCYVGNQNLNSLRG) are extracellular. The chain crosses the membrane as a helical span at residues 403–423 (FVLGPLVLYLLVGTLFLLAGF). Residues 424–449 (VSLFRIRSVIKQGGTKTDKLEKLMIR) are Cytoplasmic-facing. The chain crosses the membrane as a helical span at residues 450 to 470 (IGIFTLLYTVPASIVVACYLY). Residues 471–500 (EQHYRESWEAALTCACPGSDAGQPRAKPEY) are Extracellular-facing. A helical membrane pass occupies residues 501 to 521 (WVLMLKYFMCLVVGITSGVWI). At 522 to 585 (WSGKTLESWR…YHKQVSLSHV (64 aa)) the chain is on the cytoplasmic side. The short motif at 525 to 530 (KTLESW) is the Lys-Thr-X-X-X-Trp motif, mediates interaction with the PDZ domain of Dvl family members element. The PDZ-binding motif lies at 583-585 (SHV).

It belongs to the G-protein coupled receptor Fz/Smo family. In terms of assembly, binding of unsaturated fatty acid molecules (via FZ domain) promotes homodimerization (via FZ domain). Interacts with WNT2B. Interacts with WNT7A. Interacts with GOPC. Post-translationally, ubiquitinated by RNF43 and ZNRF3, leading to its degradation by the proteasome.

The protein localises to the cell membrane. It is found in the golgi apparatus membrane. It localises to the synapse. The protein resides in the perikaryon. Its subcellular location is the cell projection. The protein localises to the dendrite. It is found in the axon. Functionally, receptor for Wnt proteins. Functions in the canonical Wnt/beta-catenin signaling pathway. In vitro activates WNT2, WNT10B, WNT5A, but not WNT2B or WNT4 signaling. In neurons, activation by WNT7A promotes formation of synapses. May be involved in transduction and intercellular transmission of polarity information during tissue morphogenesis and/or in differentiated tissues. Plays a role in yolk sac angiogenesis and in placental vascularization. Plays a role in ocular development. This chain is Frizzled-5 (Fzd5), found in Rattus norvegicus (Rat).